The chain runs to 600 residues: Aspartate--tRNA(Asp/Asn) ligase (600 aa).

Glu-174 provides a ligand contact to L-aspartate. The aspartate stretch occupies residues 198–201 (QLFK). Residue Arg-220 participates in L-aspartate binding. ATP-binding positions include 220-222 (RDE) and Gln-229. His-457 contributes to the L-aspartate binding site. Residue Glu-491 coordinates ATP. Arg-498 provides a ligand contact to L-aspartate. 543–546 (GLDR) is an ATP binding site.

This sequence belongs to the class-II aminoacyl-tRNA synthetase family. Type 1 subfamily. In terms of assembly, homodimer.

Its subcellular location is the cytoplasm. It catalyses the reaction tRNA(Asx) + L-aspartate + ATP = L-aspartyl-tRNA(Asx) + AMP + diphosphate. Aspartyl-tRNA synthetase with relaxed tRNA specificity since it is able to aspartylate not only its cognate tRNA(Asp) but also tRNA(Asn). Reaction proceeds in two steps: L-aspartate is first activated by ATP to form Asp-AMP and then transferred to the acceptor end of tRNA(Asp/Asn). The chain is Aspartate--tRNA(Asp/Asn) ligase from Burkholderia cenocepacia (strain ATCC BAA-245 / DSM 16553 / LMG 16656 / NCTC 13227 / J2315 / CF5610) (Burkholderia cepacia (strain J2315)).